The primary structure comprises 443 residues: MADCITIAPELSFKDQITELAAHLSRSLPNADNQVAVKEFVQGYEAQVDTEEGRGDVEDAKKKQVVKSIVDKFVELKGGLEAAKESEVESSHFLLQHVLSTTFDQASEEYAQAVKDVNEAVKKGAQETTKITRAEAASRVLKNTYNFLPSNSPIRPSTLLSLMSLLASTLDLSALPLPTSTLLPALSSWSIPSSEKVSFLTTASGLYQSTGNLAKALELLTLALKESVEPTVVERAVLLALAVPNKFELDDVLAVQGVKEQLGKVQGVVELFEGDEVEAIEKGKKWTAENVSLIEGAGIPGFTSETVLRKLRLIALVALCTKSETRQLEYAPIAKALAIEESEVETWVIDAVRSKLIVARISQPQSLIRIHSISSITASSRRFGPSEWQLLEKRLEQWKKSVNEARQVVEEAETVAQQGLGQQRRGGKRREEKKEKEDKEEQE.

In terms of domain architecture, PCI spans 205–375 (GLYQSTGNLA…SLIRIHSISS (171 aa)). Positions 413–443 (ETVAQQGLGQQRRGGKRREEKKEKEDKEEQE) are disordered. The segment covering 429-443 (RREEKKEKEDKEEQE) has biased composition (basic and acidic residues).

Belongs to the eIF-3 subunit M family. As to quaternary structure, component of the eukaryotic translation initiation factor 3 (eIF-3) complex.

It localises to the cytoplasm. Its function is as follows. Component of the eukaryotic translation initiation factor 3 (eIF-3) complex, which is involved in protein synthesis of a specialized repertoire of mRNAs and, together with other initiation factors, stimulates binding of mRNA and methionyl-tRNAi to the 40S ribosome. The eIF-3 complex specifically targets and initiates translation of a subset of mRNAs involved in cell proliferation. The polypeptide is Eukaryotic translation initiation factor 3 subunit M (Cryptococcus neoformans var. neoformans serotype D (strain B-3501A) (Filobasidiella neoformans)).